The sequence spans 172 residues: MDLRHLIQDIPDFPKPGILFRDISPLLRDPDGWGEVMRQLGDLCTEFKPDLIVGIESRGFIVGTALATNRKIGFVPVRKPGKLPGDVLGIDYSLEYGSDRLEIHADALQGHPRVLMVDDLLATGGTAKATVELIEQAGGDLVGCGFVIELAALGGRQQLPVEIPVKSLIIYS.

This sequence belongs to the purine/pyrimidine phosphoribosyltransferase family. In terms of assembly, homodimer.

It localises to the cytoplasm. The enzyme catalyses AMP + diphosphate = 5-phospho-alpha-D-ribose 1-diphosphate + adenine. The protein operates within purine metabolism; AMP biosynthesis via salvage pathway; AMP from adenine: step 1/1. Its function is as follows. Catalyzes a salvage reaction resulting in the formation of AMP, that is energically less costly than de novo synthesis. This chain is Adenine phosphoribosyltransferase, found in Prochlorococcus marinus (strain MIT 9303).